Consider the following 197-residue polypeptide: Imidazoleglycerol-phosphate dehydratase (197 aa).

The protein belongs to the imidazoleglycerol-phosphate dehydratase family.

It localises to the cytoplasm. The enzyme catalyses D-erythro-1-(imidazol-4-yl)glycerol 3-phosphate = 3-(imidazol-4-yl)-2-oxopropyl phosphate + H2O. It participates in amino-acid biosynthesis; L-histidine biosynthesis; L-histidine from 5-phospho-alpha-D-ribose 1-diphosphate: step 6/9. This Streptomyces avermitilis (strain ATCC 31267 / DSM 46492 / JCM 5070 / NBRC 14893 / NCIMB 12804 / NRRL 8165 / MA-4680) protein is Imidazoleglycerol-phosphate dehydratase.